Here is a 168-residue protein sequence, read N- to C-terminus: MRKFTQFVLITAAIMAAPSAFAEMKIAVLNYQMALLESDAAKQYAVDAEKKFGPQLNKLKNLERDAKALQDKLVSNGSKMSQGDREKAELDFKQKARDFQFQSKELNESKAAADRDMLKKLKPKLDQAVEETIKKGGYDMVIERGAVVDVKPQYDITRQVIERMNQLR.

Positions Met-1–Ala-22 are cleaved as a signal peptide.

The protein belongs to the Skp family.

The polypeptide is Skp-like protein (Pseudomonas aeruginosa (strain ATCC 15692 / DSM 22644 / CIP 104116 / JCM 14847 / LMG 12228 / 1C / PRS 101 / PAO1)).